Here is a 438-residue protein sequence, read N- to C-terminus: MNVKKTENALSVTLKNFIKSESFGGIFLFLNAVLAMVVANSFLKESYFALWHTPFGFQIGDFFIGFSLHNWIDDVLMALFFLMIGLEIKRELLFGELSSFKKASFPVIAALGGMIAPGLIYFFLNADTPSQHGFGIPMATDIAFALGVIMLLGKRVPTALKVFLITLAVADDLGAIVVIALFYTTNLKFAWLLGALGVVLILAVLNRLNIRSLIPYLLLGVLLWFCVHQSGIHATIAAVVLAFMIPVKIPKDSKNVELLELGKRYAETSSGVLLTKEQQEILHSIEEKASALQSPLERLEHFLAPISGYFIMPLFAFANAGVSVDSSINLEVDKVLLGVILGLCLGKPLGIFLITFISEKLKITARPKGISWWHILGAGLLAGIGFTMSMFISNLAFTSEHKDAMEVAKIAILLGSLISGIIGALYLFVLDKRAALKK.

A run of 11 helical transmembrane segments spans residues 23-43 (FGGIFLFLNAVLAMVVANSFL), 62-82 (FFIGFSLHNWIDDVLMALFFL), 104-124 (SFPVIAALGGMIAPGLIYFFL), 133-153 (GFGIPMATDIAFALGVIMLLG), 162-182 (VFLITLAVADDLGAIVVIALF), 185-205 (TNLKFAWLLGALGVVLILAVL), 212-232 (SLIPYLLLGVLLWFCVHQSGI), 302-322 (FLAPISGYFIMPLFAFANAGV), 337-357 (LGVILGLCLGKPLGIFLITFI), 372-392 (WWHILGAGLLAGIGFTMSMFI), and 410-430 (IAILLGSLISGIIGALYLFVL).

It belongs to the NhaA Na(+)/H(+) (TC 2.A.33) antiporter family.

It is found in the cell inner membrane. The enzyme catalyses Na(+)(in) + 2 H(+)(out) = Na(+)(out) + 2 H(+)(in). Na(+)/H(+) antiporter that extrudes sodium in exchange for external protons. This chain is Na(+)/H(+) antiporter NhaA, found in Helicobacter pylori (strain G27).